The sequence spans 172 residues: Adenine phosphoribosyltransferase (172 aa).

The protein belongs to the purine/pyrimidine phosphoribosyltransferase family. In terms of assembly, homodimer.

Its subcellular location is the cytoplasm. It carries out the reaction AMP + diphosphate = 5-phospho-alpha-D-ribose 1-diphosphate + adenine. The protein operates within purine metabolism; AMP biosynthesis via salvage pathway; AMP from adenine: step 1/1. Functionally, catalyzes a salvage reaction resulting in the formation of AMP, that is energically less costly than de novo synthesis. In Trichormus variabilis (strain ATCC 29413 / PCC 7937) (Anabaena variabilis), this protein is Adenine phosphoribosyltransferase.